The sequence spans 215 residues: Probable phosphoglycerate mutase GpmB (215 aa).

Substrate contacts are provided by residues 8–15 (RHGETQWN), 21–22 (QG), R58, R60, 82–85 (ELNM), 104–105 (RR), and 151–152 (GI). H9 acts as the Tele-phosphohistidine intermediate in catalysis. E82 serves as the catalytic Proton donor/acceptor.

It belongs to the phosphoglycerate mutase family. GpmB subfamily.

It catalyses the reaction (2R)-2-phosphoglycerate = (2R)-3-phosphoglycerate. Its pathway is carbohydrate degradation; glycolysis; pyruvate from D-glyceraldehyde 3-phosphate: step 3/5. In Shigella dysenteriae serotype 1 (strain Sd197), this protein is Probable phosphoglycerate mutase GpmB.